The primary structure comprises 501 residues: Aspartate--tRNA ligase, cytoplasmic (501 aa).

Phosphothreonine is present on Thr52. An N6-acetyllysine modification is found at Lys74. Glu229 provides a ligand contact to L-aspartate. Ser249 carries the post-translational modification Phosphoserine. Positions 251 to 254 (QLYK) are aspartate. L-aspartate is bound at residue Arg273. ATP contacts are provided by residues 273–275 (RAE) and 281–283 (RHL). Lys374 carries the post-translational modification N6-acetyllysine. The interval 411 to 415 (KQSNS) is binding site for the 3'-end of tRNA. ATP is bound at residue Glu424. The L-aspartate site is built by Ser427 and Arg431. 472-475 (GLER) serves as a coordination point for ATP. Position 500 is a phosphothreonine; by PKA (Thr500).

It belongs to the class-II aminoacyl-tRNA synthetase family. Type 2 subfamily. As to quaternary structure, homodimer. Part of a multisubunit complex that groups tRNA ligases for Arg (RARS1), Asp (DARS1), Gln (QARS1), Ile (IARS1), Leu (LARS1), Lys (KARS1), Met (MARS1) the bifunctional ligase for Glu and Pro (EPRS1) and the auxiliary subunits AIMP1/p43, AIMP2/p38 and EEF1E1/p18.

Its subcellular location is the cytoplasm. The catalysed reaction is tRNA(Asp) + L-aspartate + ATP = L-aspartyl-tRNA(Asp) + AMP + diphosphate. Catalyzes the specific attachment of an amino acid to its cognate tRNA in a 2 step reaction: the amino acid (AA) is first activated by ATP to form AA-AMP and then transferred to the acceptor end of the tRNA. This Pongo abelii (Sumatran orangutan) protein is Aspartate--tRNA ligase, cytoplasmic (DARS1).